Consider the following 79-residue polypeptide: Acyl carrier protein (79 aa).

The region spanning 2–77 (SDIEARVKKI…NAIDYANTHQ (76 aa)) is the Carrier domain. Serine 37 carries the O-(pantetheine 4'-phosphoryl)serine modification.

Belongs to the acyl carrier protein (ACP) family. 4'-phosphopantetheine is transferred from CoA to a specific serine of apo-ACP by AcpS. This modification is essential for activity because fatty acids are bound in thioester linkage to the sulfhydryl of the prosthetic group.

Its subcellular location is the cytoplasm. Its pathway is lipid metabolism; fatty acid biosynthesis. Carrier of the growing fatty acid chain in fatty acid biosynthesis. This Paracidovorax citrulli (strain AAC00-1) (Acidovorax citrulli) protein is Acyl carrier protein.